The following is a 150-amino-acid chain: Large ribosomal subunit protein bL9 (150 aa).

It belongs to the bacterial ribosomal protein bL9 family.

Binds to the 23S rRNA. The polypeptide is Large ribosomal subunit protein bL9 (Alcanivorax borkumensis (strain ATCC 700651 / DSM 11573 / NCIMB 13689 / SK2)).